A 1015-amino-acid polypeptide reads, in one-letter code: Condensin complex subunit 3 (1015 aa).

5 HEAT repeats span residues 94–131 (GLLNYLFTFLLKSHEANSNAVRFRVCLLINKLLGSMPE), 138–173 (DVFDKINKAMLIRLKDKIPNVRIQAVLALSRLQDPK), 174–212 (DDECPVVNAYATLIENDSNPEVRRAVLSCIAPSAKTLPK), 238–275 (MRAMSIAQRVMLLQQGLNDRSDAVKQAMQKHLLQGWLR), and 276–313 (FSEGNILELLHRLDVENSSEVAVSVLNALFSITPLSEL). Ser390 is subject to Phosphoserine. 3 HEAT repeats span residues 399–436 (EFIGQQLILIIKSLDTSEEGGRKKLLAVLQEILILPTI), 439–478 (SLVSFLVERLLHIIIDDNKRTQIVTEIISEIRAPIVTVGV), and 617–654 (DFARKHFVLLLQVLQIDDVTIKISALKAIFDQLMTFGI). Ser674 bears the Phosphoserine mark. HEAT repeat units follow at residues 687–724 (ATAKNVLKLLSDFLDSEVSELRTGAAEGLAKLMFSGLL) and 865–907 (KDLL…QAEA). The residue at position 931 (Thr931) is a Phosphothreonine. Over residues 941-950 (ASKSTQLKTN) the composition is skewed to polar residues. Residues 941 to 994 (ASKSTQLKTNRGQRKVTVSARTNRRCQTAEADSESDHEVPEPESEMKMRLPRRA) form a disordered region. Phosphoserine is present on residues Ser973, Ser975, Ser1002, and Ser1015. Positions 974 to 988 (ESDHEVPEPESEMKM) are enriched in basic and acidic residues.

Belongs to the CND3 (condensin subunit 3) family. As to quaternary structure, component of the condensin complex, which contains the SMC2 and SMC4 heterodimer, and three non SMC subunits that probably regulate the complex: NCAPH/BRRN1, NCAPD2/CAPD2 and NCAPG. Phosphorylated by CDK1. Its phosphorylation, as well as that of NCAPD2 and NCAPH subunits, activates the condensin complex and is required for chromosome condensation. In terms of tissue distribution, highly expressed in testis.

Its subcellular location is the nucleus. It is found in the cytoplasm. The protein localises to the chromosome. In terms of biological role, regulatory subunit of the condensin complex, a complex required for conversion of interphase chromatin into mitotic-like condense chromosomes. The condensin complex probably introduces positive supercoils into relaxed DNA in the presence of type I topoisomerases and converts nicked DNA into positive knotted forms in the presence of type II topoisomerases. This Homo sapiens (Human) protein is Condensin complex subunit 3 (NCAPG).